We begin with the raw amino-acid sequence, 469 residues long: 3-isopropylmalate dehydratase large subunit (469 aa).

[4Fe-4S] cluster contacts are provided by Cys-347, Cys-408, and Cys-411.

This sequence belongs to the aconitase/IPM isomerase family. LeuC type 1 subfamily. As to quaternary structure, heterodimer of LeuC and LeuD. It depends on [4Fe-4S] cluster as a cofactor.

The catalysed reaction is (2R,3S)-3-isopropylmalate = (2S)-2-isopropylmalate. Its pathway is amino-acid biosynthesis; L-leucine biosynthesis; L-leucine from 3-methyl-2-oxobutanoate: step 2/4. Catalyzes the isomerization between 2-isopropylmalate and 3-isopropylmalate, via the formation of 2-isopropylmaleate. The polypeptide is 3-isopropylmalate dehydratase large subunit (Haemophilus influenzae (strain PittEE)).